The chain runs to 413 residues: 1-deoxy-D-xylulose 5-phosphate reductoisomerase (413 aa).

Positions 13, 14, 15, 16, 40, 41, and 127 each coordinate NADPH. Position 128 (Lys-128) interacts with 1-deoxy-D-xylulose 5-phosphate. Residue Glu-129 participates in NADPH binding. Asp-153 lines the Mn(2+) pocket. 4 residues coordinate 1-deoxy-D-xylulose 5-phosphate: Ser-154, Glu-155, Ser-184, and His-207. Residue Glu-155 coordinates Mn(2+). Gly-213 is an NADPH binding site. Residues Ser-220, Asn-225, Lys-226, and Glu-229 each contribute to the 1-deoxy-D-xylulose 5-phosphate site. Glu-229 provides a ligand contact to Mn(2+).

The protein belongs to the DXR family. Mg(2+) is required as a cofactor. Requires Mn(2+) as cofactor.

The catalysed reaction is 2-C-methyl-D-erythritol 4-phosphate + NADP(+) = 1-deoxy-D-xylulose 5-phosphate + NADPH + H(+). The protein operates within isoprenoid biosynthesis; isopentenyl diphosphate biosynthesis via DXP pathway; isopentenyl diphosphate from 1-deoxy-D-xylulose 5-phosphate: step 1/6. Catalyzes the NADPH-dependent rearrangement and reduction of 1-deoxy-D-xylulose-5-phosphate (DXP) to 2-C-methyl-D-erythritol 4-phosphate (MEP). The polypeptide is 1-deoxy-D-xylulose 5-phosphate reductoisomerase (Nitrosomonas europaea (strain ATCC 19718 / CIP 103999 / KCTC 2705 / NBRC 14298)).